The primary structure comprises 1404 residues: DNA-directed RNA polymerase subunit beta' (1404 aa).

Positions 70, 72, 85, and 88 each coordinate Zn(2+). Positions 460, 462, and 464 each coordinate Mg(2+). Residues C825, C899, C906, and C909 each coordinate Zn(2+).

The protein belongs to the RNA polymerase beta' chain family. The RNAP catalytic core consists of 2 alpha, 1 beta, 1 beta' and 1 omega subunit. When a sigma factor is associated with the core the holoenzyme is formed, which can initiate transcription. The cofactor is Mg(2+). Zn(2+) serves as cofactor.

The enzyme catalyses RNA(n) + a ribonucleoside 5'-triphosphate = RNA(n+1) + diphosphate. Functionally, DNA-dependent RNA polymerase catalyzes the transcription of DNA into RNA using the four ribonucleoside triphosphates as substrates. The protein is DNA-directed RNA polymerase subunit beta' of Nitrosomonas europaea (strain ATCC 19718 / CIP 103999 / KCTC 2705 / NBRC 14298).